Here is a 597-residue protein sequence, read N- to C-terminus: UvrABC system protein C (597 aa).

The 79-residue stretch at 15 to 93 (NSPGVYQYFD…IKKHQPRFNV (79 aa)) folds into the GIY-YIG domain. The 36-residue stretch at 207 to 242 (KDSLQRFRNQMKQHSEKMEFEDAQRIKNKIDVLENY) folds into the UVR domain.

Belongs to the UvrC family. In terms of assembly, interacts with UvrB in an incision complex.

The protein resides in the cytoplasm. In terms of biological role, the UvrABC repair system catalyzes the recognition and processing of DNA lesions. UvrC both incises the 5' and 3' sides of the lesion. The N-terminal half is responsible for the 3' incision and the C-terminal half is responsible for the 5' incision. This chain is UvrABC system protein C, found in Christiangramia forsetii (strain DSM 17595 / CGMCC 1.15422 / KT0803) (Gramella forsetii).